The chain runs to 326 residues: Cinnamoyl-CoA reductase CAD2 (326 aa).

NADP(+) is bound by residues 14–20 (GASGYIA), Arg39, Lys46, 66–67 (NL), and 86–88 (TAS). 4 residues coordinate (E)-coniferaldehyde: Ser130, Tyr136, Arg141, and Tyr165. NADP(+) is bound by residues Tyr165, Lys169, 192 to 195 (PAMV), and Ser207. Catalysis depends on Lys169, which acts as the Proton donor. (E)-coniferaldehyde-binding residues include Met194, Ser207, Phe226, Val257, and Tyr290.

This sequence belongs to the NAD(P)-dependent epimerase/dehydratase family. Dihydroflavonol-4-reductase subfamily.

It localises to the cytoplasm. The enzyme catalyses (E)-cinnamaldehyde + NADP(+) + CoA = (E)-cinnamoyl-CoA + NADPH + H(+). It carries out the reaction (E)-coniferaldehyde + NADP(+) + CoA = (E)-feruloyl-CoA + NADPH + H(+). The catalysed reaction is (E)-4-coumaraldehyde + NADP(+) + CoA = (E)-4-coumaroyl-CoA + NADPH + H(+). Its pathway is aromatic compound metabolism; phenylpropanoid biosynthesis. Involved in lignin biosynthesis. Regulates the monolignol composition by catalyzing the conversion of cinnamoyl-CoAs into their corresponding cinnamaldehydes. Can use coumaraldehyde and coniferaldehyde as substrates, but barely sinapaldehyde. The sequence is that of Cinnamoyl-CoA reductase CAD2 from Medicago truncatula (Barrel medic).